The sequence spans 185 residues: MKDPIVKKTEEKMKKSVNSIDEELKKLRTGRPSPALLEEIKVDYYGVPTPINQVATVNVTEERSLIIKPWEKNLLNAVEKAIQASDLGLNPMNDGNVIRLVFPTPTTEQRQKWVKKAKDIVEHGKIAVRNIRREILKELKDLKKNGEISEDDERRLEKEIQNLTDKYVEELDKLFERKEKEIMEF.

The protein belongs to the RRF family.

The protein localises to the cytoplasm. In terms of biological role, responsible for the release of ribosomes from messenger RNA at the termination of protein biosynthesis. May increase the efficiency of translation by recycling ribosomes from one round of translation to another. The chain is Ribosome-recycling factor from Thermosipho melanesiensis (strain DSM 12029 / CIP 104789 / BI429).